A 409-amino-acid polypeptide reads, in one-letter code: uncharacterized protein (409 aa).

Residues 3–162 enclose the N-acetyltransferase domain; the sequence is TDVRVLRQDD…DDVRLRYAVP (160 aa). Acetyl-CoA is bound by residues 82-84, 90-95, and 118-119; these read VSV, RRGVLT, and SE. Tyr-123 (proton donor) is an active-site residue. Phe-409 acts as the Proton acceptor; via carboxylate in catalysis.

This sequence belongs to the acetyltransferase Eis family. As to quaternary structure, homohexamer; trimer of dimers.

This is an uncharacterized protein from Streptomyces avermitilis (strain ATCC 31267 / DSM 46492 / JCM 5070 / NBRC 14893 / NCIMB 12804 / NRRL 8165 / MA-4680).